The sequence spans 338 residues: Phenylalanine--tRNA ligase alpha subunit (338 aa).

A Mg(2+)-binding site is contributed by E252.

Belongs to the class-II aminoacyl-tRNA synthetase family. Phe-tRNA synthetase alpha subunit type 1 subfamily. In terms of assembly, tetramer of two alpha and two beta subunits. Mg(2+) is required as a cofactor.

The protein localises to the cytoplasm. It carries out the reaction tRNA(Phe) + L-phenylalanine + ATP = L-phenylalanyl-tRNA(Phe) + AMP + diphosphate + H(+). This is Phenylalanine--tRNA ligase alpha subunit from Pseudomonas putida (strain ATCC 700007 / DSM 6899 / JCM 31910 / BCRC 17059 / LMG 24140 / F1).